The sequence spans 359 residues: Beta-1,3-galactosyltransferase bre-2 (359 aa).

Residues 1–11 (MRQSRRASSRV) are Cytoplasmic-facing. Residues 12 to 29 (NRLVVIFIIVASGFLLLY) traverse the membrane as a helical; Signal-anchor for type II membrane protein segment. The Lumenal segment spans residues 30–359 (KNTQQFTQID…NPDLEELKEK (330 aa)). 3 N-linked (GlcNAc...) asparagine glycosylation sites follow: N73, N163, and N209.

The protein belongs to the glycosyltransferase 31 family.

The protein resides in the golgi apparatus membrane. The protein operates within protein modification; protein glycosylation. Transfers N-acetylgalactosamine onto carbohydrate substrates. Involved in susceptibility to pore-forming crystal toxins in conjunction with bre-1, bre-3, bre-4, and bre-5. Involved in resistance to the nematotoxic C.cinerea galectin Cgl2. This chain is Beta-1,3-galactosyltransferase bre-2, found in Caenorhabditis elegans.